The following is a 24-amino-acid chain: Superoxide dismutase [Cu-Zn], chloroplastic (24 aa).

Belongs to the Cu-Zn superoxide dismutase family. Homodimer. The cofactor is Cu cation. It depends on Zn(2+) as a cofactor.

The protein localises to the plastid. Its subcellular location is the chloroplast. The enzyme catalyses 2 superoxide + 2 H(+) = H2O2 + O2. In terms of biological role, destroys radicals which are normally produced within the cells and which are toxic to biological systems. This chain is Superoxide dismutase [Cu-Zn], chloroplastic, found in Picea abies (Norway spruce).